A 244-amino-acid polypeptide reads, in one-letter code: 5-oxoprolinase subunit A (244 aa).

Belongs to the LamB/PxpA family. In terms of assembly, forms a complex composed of PxpA, PxpB and PxpC.

It carries out the reaction 5-oxo-L-proline + ATP + 2 H2O = L-glutamate + ADP + phosphate + H(+). Functionally, catalyzes the cleavage of 5-oxoproline to form L-glutamate coupled to the hydrolysis of ATP to ADP and inorganic phosphate. The polypeptide is 5-oxoprolinase subunit A (Escherichia coli O17:K52:H18 (strain UMN026 / ExPEC)).